The primary structure comprises 458 residues: Glutamyl-tRNA reductase (458 aa).

Substrate-binding positions include 49 to 52, Ser-109, 114 to 116, and Gln-120; these read TCNR and EQQ. Cys-50 serves as the catalytic Nucleophile. NADP(+) is bound at residue 191 to 196; that stretch reads GAGAMA.

The protein belongs to the glutamyl-tRNA reductase family. As to quaternary structure, homodimer.

It carries out the reaction (S)-4-amino-5-oxopentanoate + tRNA(Glu) + NADP(+) = L-glutamyl-tRNA(Glu) + NADPH + H(+). Its pathway is porphyrin-containing compound metabolism; protoporphyrin-IX biosynthesis; 5-aminolevulinate from L-glutamyl-tRNA(Glu): step 1/2. In terms of biological role, catalyzes the NADPH-dependent reduction of glutamyl-tRNA(Glu) to glutamate 1-semialdehyde (GSA). This is Glutamyl-tRNA reductase from Corynebacterium aurimucosum (strain ATCC 700975 / DSM 44827 / CIP 107346 / CN-1) (Corynebacterium nigricans).